We begin with the raw amino-acid sequence, 906 residues long: Protein translocase subunit SecA (906 aa).

Residues Gln-86, 104–108 (GEGKT), and Asp-511 each bind ATP. Positions 852–888 (EHESVIDNNQRHDEDEQEEAPKVKQVRREGPKVKRND) are enriched in basic and acidic residues. Residues 852 to 906 (EHESVIDNNQRHDEDEQEEAPKVKQVRREGPKVKRNDPCPCGSGKKYKQCHSKVE) are disordered. Residues Cys-890, Cys-892, Cys-901, and His-902 each contribute to the Zn(2+) site. Residues 896–906 (KKYKQCHSKVE) are compositionally biased toward basic residues.

This sequence belongs to the SecA family. As to quaternary structure, monomer and homodimer. Part of the essential Sec protein translocation apparatus which comprises SecA, SecYEG and auxiliary proteins SecDF-YajC and YidC. Requires Zn(2+) as cofactor.

It localises to the cell inner membrane. It is found in the cytoplasm. The enzyme catalyses ATP + H2O + cellular proteinSide 1 = ADP + phosphate + cellular proteinSide 2.. Functionally, part of the Sec protein translocase complex. Interacts with the SecYEG preprotein conducting channel. Has a central role in coupling the hydrolysis of ATP to the transfer of proteins into and across the cell membrane, serving both as a receptor for the preprotein-SecB complex and as an ATP-driven molecular motor driving the stepwise translocation of polypeptide chains across the membrane. The chain is Protein translocase subunit SecA from Francisella tularensis subsp. tularensis (strain SCHU S4 / Schu 4).